A 514-amino-acid chain; its full sequence is Na(+)/H(+) antiporter NhaB (514 aa).

A run of 12 helical transmembrane segments spans residues 23 to 43 (LALL…PFIA), 63 to 83 (PLLP…TSAA), 97 to 117 (LLLM…LFIF), 120 to 140 (LLLS…AAAF), 144 to 164 (FLDA…FYGI), 202 to 222 (LMMH…VGEP), 238 to 258 (FFLR…LTCM), 303 to 323 (AVIG…VGLI), 357 to 377 (LTVF…APII), 391 to 411 (LFYL…VGTI), 447 to 467 (ATPN…APLI), and 475 to 495 (VWMA…CVEF).

The protein belongs to the NhaB Na(+)/H(+) (TC 2.A.34) antiporter family.

It is found in the cell inner membrane. The catalysed reaction is 2 Na(+)(in) + 3 H(+)(out) = 2 Na(+)(out) + 3 H(+)(in). Functionally, na(+)/H(+) antiporter that extrudes sodium in exchange for external protons. The protein is Na(+)/H(+) antiporter NhaB of Salmonella gallinarum (strain 287/91 / NCTC 13346).